The following is a 131-amino-acid chain: D-ribose pyranase (131 aa).

His20 (proton donor) is an active-site residue. Residues Asp28, His98, and 120–122 (FSN) each bind substrate.

This sequence belongs to the RbsD / FucU family. RbsD subfamily. In terms of assembly, homodecamer.

It is found in the cytoplasm. It carries out the reaction beta-D-ribopyranose = beta-D-ribofuranose. The protein operates within carbohydrate metabolism; D-ribose degradation; D-ribose 5-phosphate from beta-D-ribopyranose: step 1/2. In terms of biological role, catalyzes the interconversion of beta-pyran and beta-furan forms of D-ribose. This chain is D-ribose pyranase, found in Levilactobacillus brevis (strain ATCC 367 / BCRC 12310 / CIP 105137 / JCM 1170 / LMG 11437 / NCIMB 947 / NCTC 947) (Lactobacillus brevis).